A 124-amino-acid polypeptide reads, in one-letter code: Immunoglobulin lambda variable 5-52 (124 aa).

The first 19 residues, 1 to 19, serve as a signal peptide directing secretion; that stretch reads MAWTLLLLVLLSHCTGSLS. A framework-1 region spans residues 20-44; it reads QPVLTQPSSHSASSGASVRLTCMLS. In terms of domain architecture, Ig-like spans 21 to 124; it reads PVLTQPSSHS…CGTWHSNSKT (104 aa). Cys-41 and Cys-115 are joined by a disulfide. The segment at 45 to 53 is complementarity-determining-1; sequence SGFSVGDFW. The segment at 54 to 70 is framework-2; the sequence is IRWYQQKPGNPPRYLLY. The segment at 71 to 77 is complementarity-determining-2; that stretch reads YHSDSNK. A framework-3 region spans residues 78–115; sequence GQGSGVPSRFSGSNDASANAGILRISGLQPEDEADYYC. The tract at residues 116 to 124 is complementarity-determining-3; it reads GTWHSNSKT.

In terms of assembly, immunoglobulins are composed of two identical heavy chains and two identical light chains; disulfide-linked.

It is found in the secreted. It localises to the cell membrane. Functionally, v region of the variable domain of immunoglobulin light chains that participates in the antigen recognition. Immunoglobulins, also known as antibodies, are membrane-bound or secreted glycoproteins produced by B lymphocytes. In the recognition phase of humoral immunity, the membrane-bound immunoglobulins serve as receptors which, upon binding of a specific antigen, trigger the clonal expansion and differentiation of B lymphocytes into immunoglobulins-secreting plasma cells. Secreted immunoglobulins mediate the effector phase of humoral immunity, which results in the elimination of bound antigens. The antigen binding site is formed by the variable domain of one heavy chain, together with that of its associated light chain. Thus, each immunoglobulin has two antigen binding sites with remarkable affinity for a particular antigen. The variable domains are assembled by a process called V-(D)-J rearrangement and can then be subjected to somatic hypermutations which, after exposure to antigen and selection, allow affinity maturation for a particular antigen. This is Immunoglobulin lambda variable 5-52 from Homo sapiens (Human).